Reading from the N-terminus, the 807-residue chain is Leucine--tRNA ligase (807 aa).

Positions 40–51 (PYPSGQGLHVGH) match the 'HIGH' region motif. The 'KMSKS' region motif lies at 575–579 (KMSKS). Lysine 578 lines the ATP pocket.

The protein belongs to the class-I aminoacyl-tRNA synthetase family.

Its subcellular location is the cytoplasm. The enzyme catalyses tRNA(Leu) + L-leucine + ATP = L-leucyl-tRNA(Leu) + AMP + diphosphate. This is Leucine--tRNA ligase from Latilactobacillus sakei subsp. sakei (strain 23K) (Lactobacillus sakei subsp. sakei).